Here is a 207-residue protein sequence, read N- to C-terminus: MANVKLFDQTGKEVSSVELNDAIFGIEPNESVVFDVVISQRASLRQGTHAVKNRSAVSGGGRKPWRQKGTGRARQGSIRSPQWRGGGVVFGPTPRSYGYKLPQKVRRLALKSVYSAKVAEDKFVAVEGLSFAAPKTAEFAKVLSALSIDSKVLVIVEEGNEFAALSARNLPNVKVATATTASVLDIVNSDKLLVTKEAISTIEEVLA.

The disordered stretch occupies residues 49–78; it reads HAVKNRSAVSGGGRKPWRQKGTGRARQGSI.

The protein belongs to the universal ribosomal protein uL4 family. In terms of assembly, part of the 50S ribosomal subunit.

One of the primary rRNA binding proteins, this protein initially binds near the 5'-end of the 23S rRNA. It is important during the early stages of 50S assembly. It makes multiple contacts with different domains of the 23S rRNA in the assembled 50S subunit and ribosome. Its function is as follows. Forms part of the polypeptide exit tunnel. The sequence is that of Large ribosomal subunit protein uL4 from Streptococcus uberis (strain ATCC BAA-854 / 0140J).